The primary structure comprises 260 residues: Tetraspanin-14 (260 aa).

The Cytoplasmic segment spans residues 1 to 10 (MKSQSHKPWN). The chain crosses the membrane as a helical span at residues 11 to 31 (LVAGIFFPIITFFLSAPLVGH). Residues 32–54 (ALYLFCMRNDHVYYRDFQSTLPR) are Extracellular-facing. The helical transmembrane segment at 55-75 (VQTLVSVSLLALFLLSNIGMF) threads the bilayer. Over 76–80 (LRPRR) the chain is Cytoplasmic. The helical transmembrane segment at 81–101 (LSYFLVIVFFIGFAYSGVYKM) threads the bilayer. At 102–260 (ESRRFSPTPM…FLSSLTSLFR (159 aa)) the chain is on the extracellular side. N-linked (GlcNAc...) asparagine glycosylation occurs at Asn182.

The protein belongs to the tetraspanin (TM4SF) family.

The protein resides in the membrane. Functionally, may be involved in the regulation of cell differentiation. The sequence is that of Tetraspanin-14 (TET14) from Arabidopsis thaliana (Mouse-ear cress).